The primary structure comprises 62 residues: Conotoxin Tx5.1 (62 aa).

Positions M1–A22 are cleaved as a signal peptide. Residues Q23–R49 constitute a propeptide that is removed on maturation. Residue Q60 is modified to Glutamine amide.

The protein belongs to the conotoxin T superfamily. Contains 2 disulfide bonds that can be either 'C1-C3, C2-C4' or 'C1-C4, C2-C3', since these disulfide connectivities have been observed for conotoxins with cysteine framework V (for examples, see AC P0DQQ7 and AC P81755). In terms of tissue distribution, expressed by the venom duct.

Its subcellular location is the secreted. This chain is Conotoxin Tx5.1, found in Conus textile (Cloth-of-gold cone).